Reading from the N-terminus, the 489-residue chain is Protein SOF1 (489 aa).

WD repeat units lie at residues 65–105 (GHRD…EFVS), 113–158 (VTGL…YSNK), 177–214 (DGES…PVSD), 217–257 (WGAD…PTQK), 259–299 (VQTM…RSLN), 303–342 (DHVS…SREI), and 346–385 (KRMQ…RSNV). Composition is skewed to basic and acidic residues over residues 440–459 (REAN…ERKK) and 466–489 (HKYE…TQEK). The disordered stretch occupies residues 440–489 (REANERRTRKDMPYISERKKQIVGTVHKYEDSGRDRKRRKEDDKRDTQEK).

Belongs to the WD repeat DCAF13/WDSOF1 family. Interacts with snoRNA U3. Interacts with NOP1 and MPP10. Component of the ribosomal small subunit (SSU) processome composed of at least 40 protein subunits and snoRNA U3.

It localises to the nucleus. The protein resides in the nucleolus. Its function is as follows. Required for ribosomal RNA processing. In Saccharomyces cerevisiae (strain ATCC 204508 / S288c) (Baker's yeast), this protein is Protein SOF1 (SOF1).